Consider the following 941-residue polypeptide: MQLFQNILVSIALLTQVVFAIEITENKVDRGTVTLNLSDITIYPGASWSIIDNAYTSFVGKLDVRDGAGLYISSTSHLLALQVSLTALLHSITNNGVVSFDSRISRTSSSYDLRGVSFTNNGEMYFAASGEFSSSTALTSASWTNTRLLSFYQNQRTSGTVSLGMPLGSITNNGQVCLNNQVYEQTTQIKGSGCFTANGDSTIYISNVLLAVSPKQNFYLTDKGSSMIVQAVSTTQTFNVYGFGEGNKIGLTIPLMGNLWNSAYAYDTTSGILTLRNLLLEQKFNIGTGYDPSKFQVVTDSGSGIPSTILGSVAYYGRVPERTLPKSCQIPCKPIPEAPGTTPTQYTTTITKTNTAGNTVTESGVVNVSTDKGGSWFTTTSMFPALSTAPSTATVFSSDTIMSTVEPDTTELASLTDIPIETSSVEELLSVMSNWEPSSAPTLSIETPVSSHHSSMQHSSFESSADINTVFSSESAFETASDYIVSTPSSISHSTMVPQSSVSALSVVSESLASAEPSFVVPSESFIFSASSAAPQPSSSTYSVSFTTQFETPSSAGPSLVTSVESNTELISSATQSSDIQTEFTSTWTTTNSDGSVVTESGIISQSGTSLTTLTTFQPATSLVVPPYSVIETEFTSTWTTTNSDSSVATESGVVSQSDTLLTTVTTFPPAPSAIVPEFTSPWKINTSIESSETLTVSASSYETVGESLAAATSSYLSSATVVVAPSESEINTSSSILNNEEIASAPVSDTTSIAEHHDGSLSMTTTEFVNSNSLPSSHSIVTATITSCNKSKCSESVVTYVSSVSCATITVGDSEKNSSIVGNNISSIVGDDVSNTQAITMATSTESATTLTSVSGAKPSVANDATNSVHTTDYTTATTGVQNGSSLSIPSDIPIEISDITPTDSSSSAVTISYENGSNKESIENIKYLTLVVFGLMMFM.

An N-terminal signal peptide occupies residues 1-20 (MQLFQNILVSIALLTQVVFA). Asparagine 36, asparagine 367, asparagine 686, asparagine 732, asparagine 790, asparagine 818, asparagine 825, asparagine 884, and asparagine 917 each carry an N-linked (GlcNAc...) asparagine glycan. Asparagine 917 carries the GPI-anchor amidated asparagine lipid modification. A propeptide spans 918-941 (GSNKESIENIKYLTLVVFGLMMFM) (removed in mature form).

This sequence belongs to the HYR1/IFF family. The GPI-anchor is attached to the protein in the endoplasmic reticulum and serves to target the protein to the cell surface. There, the glucosamine-inositol phospholipid moiety is cleaved off and the GPI-modified mannoprotein is covalently attached via its lipidless GPI glycan remnant to the 1,6-beta-glucan of the outer cell wall layer.

It localises to the secreted. It is found in the cell wall. The protein localises to the membrane. Functionally, GPI-anchored cell wall protein involved in cell wall organization, hyphal growth, as well as in host-fungal interaction and virulence. The chain is Cell wall protein IFF3 (IFF3) from Candida albicans (strain SC5314 / ATCC MYA-2876) (Yeast).